A 113-amino-acid chain; its full sequence is Putative pterin-4-alpha-carbinolamine dehydratase (113 aa).

The protein belongs to the pterin-4-alpha-carbinolamine dehydratase family.

The catalysed reaction is (4aS,6R)-4a-hydroxy-L-erythro-5,6,7,8-tetrahydrobiopterin = (6R)-L-erythro-6,7-dihydrobiopterin + H2O. The polypeptide is Putative pterin-4-alpha-carbinolamine dehydratase (Rickettsia bellii (strain OSU 85-389)).